A 302-amino-acid polypeptide reads, in one-letter code: Short-chain dehydrogenase/reductase 3 (302 aa).

4 consecutive transmembrane segments (helical) span residues 9 to 29, 170 to 190, 195 to 215, and 253 to 273; these read LVMF…GLVL, IVCL…DYCT, AFAF…VSAT, and AVQL…LVIL. Substrate is bound at residue serine 175. The active-site Proton acceptor is tyrosine 188.

The protein belongs to the short-chain dehydrogenases/reductases (SDR) family. Widely expressed with highest levels found in heart, placenta, lung, liver, kidney, pancreas, thyroid, testis, stomach, trachea and spinal cord. Lower levels found in skeletal muscle, intestine and lymph node. No expression detected in brain. In the retina, expressed in cone but not rod outer segments.

It localises to the membrane. The enzyme catalyses all-trans-retinol + NADP(+) = all-trans-retinal + NADPH + H(+). Catalyzes the reduction of all-trans-retinal to all-trans-retinol in the presence of NADPH. The sequence is that of Short-chain dehydrogenase/reductase 3 (DHRS3) from Homo sapiens (Human).